The chain runs to 98 residues: EKC/KEOPS complex subunit GON7 (98 aa).

N-acetylmethionine is present on methionine 1. The tract at residues 55–98 is disordered; it reads DAQGLAEDPDDALDGDDEDDAEDENNSGRTNSDGPSAKRPKPAS. Residues 61–79 are compositionally biased toward acidic residues; that stretch reads EDPDDALDGDDEDDAEDEN.

In terms of assembly, component of the EKC/KEOPS complex composed of at least GON7, TP53RK, TPRKB, OSGEP and LAGE3; the whole complex dimerizes.

It is found in the nucleus. Component of the EKC/KEOPS complex that is required for the formation of a threonylcarbamoyl group on adenosine at position 37 (t(6)A37) in tRNAs that read codons beginning with adenine. The complex is probably involved in the transfer of the threonylcarbamoyl moiety of threonylcarbamoyl-AMP (TC-AMP) to the N6 group of A37. GON7 plays a supporting role to the catalytic subunit OSGEP in the complex. This chain is EKC/KEOPS complex subunit GON7, found in Mus musculus (Mouse).